The following is a 200-amino-acid chain: Recombination protein RecR (200 aa).

The C4-type zinc-finger motif lies at 59 to 74 (CSTCGNIDSQNPCTVC). In terms of domain architecture, Toprim spans 82-177 (SIIVVVADVA…KVTRLAHGVP (96 aa)).

The protein belongs to the RecR family.

May play a role in DNA repair. It seems to be involved in an RecBC-independent recombinational process of DNA repair. It may act with RecF and RecO. In Rhodopseudomonas palustris (strain ATCC BAA-98 / CGA009), this protein is Recombination protein RecR.